The following is a 481-amino-acid chain: NADH-quinone oxidoreductase subunit N (481 aa).

14 helical membrane passes run 11–31, 37–57, 74–94, 103–123, 128–148, 162–182, 205–225, 238–258, 272–292, 300–320, 328–348, 371–391, 405–425, and 457–477; these read AYPE…DLFA, YLAF…TCGI, AMSD…LIYS, LLKG…MVMV, LITL…MVAL, FFVL…MLYG, IFII…SAVP, PTAV…GFVM, WQGM…IAAI, MLAY…IAAG, MFYV…IMLV, LAFM…MIGF, GYIW…FYYL, and LAII…LSAI.

The protein belongs to the complex I subunit 2 family. As to quaternary structure, NDH-1 is composed of 14 different subunits. Subunits NuoA, H, J, K, L, M, N constitute the membrane sector of the complex.

It is found in the cell inner membrane. The catalysed reaction is a quinone + NADH + 5 H(+)(in) = a quinol + NAD(+) + 4 H(+)(out). NDH-1 shuttles electrons from NADH, via FMN and iron-sulfur (Fe-S) centers, to quinones in the respiratory chain. The immediate electron acceptor for the enzyme in this species is believed to be ubiquinone. Couples the redox reaction to proton translocation (for every two electrons transferred, four hydrogen ions are translocated across the cytoplasmic membrane), and thus conserves the redox energy in a proton gradient. In Nitrosomonas europaea (strain ATCC 19718 / CIP 103999 / KCTC 2705 / NBRC 14298), this protein is NADH-quinone oxidoreductase subunit N.